The following is a 348-amino-acid chain: NADH-ubiquinone oxidoreductase chain 2 (348 aa).

Helical transmembrane passes span 3 to 23 (PTVLTIIISSMGLGTTLTFIG), 25 to 45 (HWLLVWMGLEINTLAIIPLMI), 59 to 79 (YFITQATASALLLFASVTNAW), 95 to 115 (ATLATAALALKIGLAPLHFWL), 149 to 171 (LNSNLLLLFGVTSTIVGGWGGLN), 178 to 198 (ILAYSSIANLGWMITILHYSP), 199 to 219 (SLTLLNLILYMFMTLTTFLLF), 242 to 262 (VIALMTLLSLGGLPPLSGFMP), 274 to 294 (SLIIPATIMALMALLSLFFYL), and 324 to 344 (LILLTSASISIFMLPMTPLIL).

It belongs to the complex I subunit 2 family.

The protein resides in the mitochondrion inner membrane. It carries out the reaction a ubiquinone + NADH + 5 H(+)(in) = a ubiquinol + NAD(+) + 4 H(+)(out). In terms of biological role, core subunit of the mitochondrial membrane respiratory chain NADH dehydrogenase (Complex I) that is believed to belong to the minimal assembly required for catalysis. Complex I functions in the transfer of electrons from NADH to the respiratory chain. The immediate electron acceptor for the enzyme is believed to be ubiquinone. The chain is NADH-ubiquinone oxidoreductase chain 2 (MT-ND2) from Scyliorhinus canicula (Small-spotted catshark).